The chain runs to 91 residues: uncharacterized protein (91 aa).

This is an uncharacterized protein from Kluyveromyces lactis (strain ATCC 8585 / CBS 2359 / DSM 70799 / NBRC 1267 / NRRL Y-1140 / WM37) (Yeast).